A 224-amino-acid chain; its full sequence is Endonuclease NucS (224 aa).

The protein belongs to the NucS endonuclease family.

It is found in the cytoplasm. Cleaves both 3' and 5' ssDNA extremities of branched DNA structures. In Mycolicibacterium smegmatis (strain ATCC 700084 / mc(2)155) (Mycobacterium smegmatis), this protein is Endonuclease NucS.